The primary structure comprises 137 residues: Large ribosomal subunit protein uL16 (137 aa).

This sequence belongs to the universal ribosomal protein uL16 family. Part of the 50S ribosomal subunit.

In terms of biological role, binds 23S rRNA and is also seen to make contacts with the A and possibly P site tRNAs. This is Large ribosomal subunit protein uL16 from Ruegeria pomeroyi (strain ATCC 700808 / DSM 15171 / DSS-3) (Silicibacter pomeroyi).